We begin with the raw amino-acid sequence, 124 residues long: Large ribosomal subunit protein uL29 (124 aa).

It belongs to the universal ribosomal protein uL29 family.

This chain is Large ribosomal subunit protein uL29 (RPL35), found in Triticum aestivum (Wheat).